The sequence spans 341 residues: tRNA dimethylallyltransferase (341 aa).

15-22 contributes to the ATP binding site; that stretch reads GPTAAGKT. 17-22 contacts substrate; the sequence is TAAGKT. 4 interaction with substrate tRNA regions span residues 44-47, 168-172, 253-258, and 302-309; these read DSAL, QRIQR, RCVGYR, and KRQITWLR.

Belongs to the IPP transferase family. In terms of assembly, monomer. The cofactor is Mg(2+).

It carries out the reaction adenosine(37) in tRNA + dimethylallyl diphosphate = N(6)-dimethylallyladenosine(37) in tRNA + diphosphate. Catalyzes the transfer of a dimethylallyl group onto the adenine at position 37 in tRNAs that read codons beginning with uridine, leading to the formation of N6-(dimethylallyl)adenosine (i(6)A). The polypeptide is tRNA dimethylallyltransferase (Verminephrobacter eiseniae (strain EF01-2)).